The sequence spans 714 residues: Polyribonucleotide nucleotidyltransferase (714 aa).

2 residues coordinate Mg(2+): aspartate 486 and aspartate 492. One can recognise a KH domain in the interval 553–612 (PRIITMKINPEKIRDVIGKGGAVIRALTEETGTTIDIEEDGTIKIGCTSAEAGEEAKKRI). Residues 622 to 690 (GQVYDGTVLK…DKGRVRLSAK (69 aa)) enclose the S1 motif domain.

The protein belongs to the polyribonucleotide nucleotidyltransferase family. Mg(2+) is required as a cofactor.

It localises to the cytoplasm. The enzyme catalyses RNA(n+1) + phosphate = RNA(n) + a ribonucleoside 5'-diphosphate. In terms of biological role, involved in mRNA degradation. Catalyzes the phosphorolysis of single-stranded polyribonucleotides processively in the 3'- to 5'-direction. This is Polyribonucleotide nucleotidyltransferase from Methylobacillus flagellatus (strain ATCC 51484 / DSM 6875 / VKM B-1610 / KT).